The chain runs to 251 residues: tRNA (guanine-N(7)-)-methyltransferase (251 aa).

Residues 1–43 (MQPNEQPGTGPADTTLEQQDTAAAEVGHPRRIRSFVRRAGRTS) are disordered. Residues 29-40 (PRRIRSFVRRAG) show a composition bias toward basic residues. S-adenosyl-L-methionine-binding residues include E82, E107, D134, and D157. D157 is an active-site residue. A substrate-binding site is contributed by K161. Residues 163 to 168 (RHNKRR) are interaction with RNA. Residues D193 and 228–231 (TKFE) contribute to the substrate site.

This sequence belongs to the class I-like SAM-binding methyltransferase superfamily. TrmB family.

It catalyses the reaction guanosine(46) in tRNA + S-adenosyl-L-methionine = N(7)-methylguanosine(46) in tRNA + S-adenosyl-L-homocysteine. The protein operates within tRNA modification; N(7)-methylguanine-tRNA biosynthesis. Catalyzes the formation of N(7)-methylguanine at position 46 (m7G46) in tRNA. The protein is tRNA (guanine-N(7)-)-methyltransferase of Ralstonia nicotianae (strain ATCC BAA-1114 / GMI1000) (Ralstonia solanacearum).